Reading from the N-terminus, the 283-residue chain is MATGAANVESPQSLPLRLLGRVALVTGGSSGIGESIVLLFRKHGAKVCIADVQDNQGQRLCETLGGSSDIAFCHCDVTIEDDVKRAVDFTVDKFGTLDIMVNNAGVSGPPCPDIRDFELSAFDRVFDINVRGVFIGMKHAARIMIPAKKGSIISISSVASTMGGLGPHAYTGSKHAVLGLTKNVAAELGKHGIRVNCVSPYAVATSLALAHLPEAERTEDTWDDFRRFVADNANLQGVELTMEDVANAVVFLASDEARYVSGMNLMVDGGFTSTNHALQVFRP.

Residues 27-33 (GGSSGIG), D51, 76-77 (DV), and 103-105 (NAG) contribute to the NAD(+) site. The active-site Proton donor is the S157. 3 residues coordinate NAD(+): Y170, K174, and T205. Y170 serves as the catalytic Proton acceptor. K174 (proton donor/acceptor) is an active-site residue.

It belongs to the short-chain dehydrogenases/reductases (SDR) family.

It carries out the reaction (1R,2S,4R)-borneol + NAD(+) = (1R,4R)-camphor + NADH + H(+). Involved in the biosynthesis of monoterpene natural products related to camphor. Catalayzes the oxidation of (+)-borneol to (+)-camphor. Shows absolute selectivity towards (+)-borneol. Catalyzes the oxidation of (+)-isoborneol to (-)-camphor. Shows absolute selectivity towards (+)-isoborneol. The protein is (+)-borneol dehydrogenase 2 of Salvia officinalis (Sage).